The primary structure comprises 520 residues: Erythritol kinase (520 aa).

The protein belongs to the FGGY kinase family.

The catalysed reaction is erythritol + ATP = D-erythritol 1-phosphate + ADP + H(+). The protein operates within carbohydrate metabolism; erythritol degradation. Catalyzes the phosphorylation of erythritol to D-erythritol-1-phosphate. In Brucella abortus (strain 2308), this protein is Erythritol kinase.